We begin with the raw amino-acid sequence, 453 residues long: Chromosomal replication initiator protein DnaA (453 aa).

The tract at residues 1–75 (MSENMEELWS…SLKKISGKQL (75 aa)) is domain I, interacts with DnaA modulators. The domain II stretch occupies residues 75-114 (LKIKFLLPGEKIKMEEQNNENEEKPESTSKKSSQGSEHTT). The segment covering 87–103 (KMEEQNNENEEKPESTS) has biased composition (basic and acidic residues). The segment at 87-112 (KMEEQNNENEEKPESTSKKSSQGSEH) is disordered. A domain III, AAA+ region region spans residues 115-331 (WLNPKYTFDT…GGLIRVIAYS (217 aa)). Glycine 159, glycine 161, lysine 162, and threonine 163 together coordinate ATP. The interval 332 to 453 (SMANKKITKE…DEIKNLLHGD (122 aa)) is domain IV, binds dsDNA.

The protein belongs to the DnaA family. Oligomerizes as a right-handed, spiral filament on DNA at oriC.

It is found in the cytoplasm. Functionally, plays an essential role in the initiation and regulation of chromosomal replication. ATP-DnaA binds to the origin of replication (oriC) to initiate formation of the DNA replication initiation complex once per cell cycle. Binds the DnaA box (a 9 base pair repeat at the origin) and separates the double-stranded (ds)DNA. Forms a right-handed helical filament on oriC DNA; dsDNA binds to the exterior of the filament while single-stranded (ss)DNA is stabiized in the filament's interior. The ATP-DnaA-oriC complex binds and stabilizes one strand of the AT-rich DNA unwinding element (DUE), permitting loading of DNA polymerase. After initiation quickly degrades to an ADP-DnaA complex that is not apt for DNA replication. Binds acidic phospholipids. The protein is Chromosomal replication initiator protein DnaA of Natranaerobius thermophilus (strain ATCC BAA-1301 / DSM 18059 / JW/NM-WN-LF).